Consider the following 396-residue polypeptide: MTGTQILELFGPAPEPPSELGRYRILSPTAGIRVSPLQLGALSIGDAWSADLGSMDKDSAMALLDAYAASGGNFIDTANAYQNEQSETWIGEWMANRNNRDQMVIATKFGPDYRAHELGKGLAVNYSGNHKRSLHMSVRDSLRKLQTSWIDILYLHTWDYTTSVPELMDALHHLVQRGEVLYLGICNTPAWVVSAANTYAQQQGKTQFSVYQGRWNPLRRELERDILPMARHFGMAITVYDALGSGKFQSRKMLARRKDQGEGLRAIYGRQQTAQEEAMSNALGVVAAQHGIESVTAVALAYLLAKAPYVFPIIGGRKIQHLHDNIQALSLRLTHEEIKYLESVGDFDLGFPYDMVGVDPADTGMATPIVAQAAPMAFVQRSKAIGYSESNKGLSE.

Asp-76 is an NADP(+) binding site. Tyr-81 acts as the Proton donor in catalysis. A substrate-binding site is contributed by His-156. NADP(+) contacts are provided by residues 186–187 (CN), Gln-212, 241–251 (DALGSGKFQSR), and 317–325 (RKIQHLHDN).

The protein belongs to the aldo/keto reductase family. Aldo/keto reductase 2 subfamily. As to quaternary structure, homodimer.

Its pathway is secondary metabolite biosynthesis; terpenoid biosynthesis. Aldo-keto reductase; part of the gene cluster that mediates the biosynthesis of calidodehydroaustin, a fungal meroterpenoid. The first step of the pathway is the synthesis of 3,5-dimethylorsellinic acid by the polyketide synthase ausA. 3,5-dimethylorsellinic acid is then prenylated by the polyprenyl transferase ausN. Further epoxidation by the FAD-dependent monooxygenase ausM and cyclization by the probable terpene cyclase ausL lead to the formation of protoaustinoid A. Protoaustinoid A is then oxidized to spiro-lactone preaustinoid A3 by the combined action of the FAD-binding monooxygenases ausB and ausC, and the dioxygenase ausE. Acid-catalyzed keto-rearrangement and ring contraction of the tetraketide portion of preaustinoid A3 by ausJ lead to the formation of preaustinoid A4. The aldo-keto reductase ausK, with the help of ausH, is involved in the next step by transforming preaustinoid A4 into isoaustinone which is in turn hydroxylated by the P450 monooxygenase ausI to form austinolide. The cytochrome P450 monooxygenase ausG modifies austinolide to austinol. Austinol is further acetylated to austin by the O-acetyltransferase ausP, which spontaneously changes to dehydroaustin. The cytochrome P450 monooxygenase ausR then converts dehydroaustin is into 7-dehydrodehydroaustin. The hydroxylation catalyzed by ausR permits the O-acetyltransferase ausQ to add an additional acetyl group to the molecule, leading to the formation of acetoxydehydroaustin. The short chain dehydrogenase ausT catalyzes the reduction of the double bond present between carbon atoms 1 and 2 to convert 7-dehydrodehydroaustin into 1,2-dihydro-7-hydroxydehydroaustin. AusQ catalyzes not only an acetylation reaction but also the addition of the PKS ausV diketide product to 1,2-dihydro-7-hydroxydehydroaustin, forming precalidodehydroaustin. Finally, the iron/alpha-ketoglutarate-dependent dioxygenase converts precalidodehydroaustin into calidodehydroaustin. This is Aldo-keto reductase ausK from Aspergillus calidoustus.